Reading from the N-terminus, the 469-residue chain is Ribosomal protein uS12 methylthiotransferase RimO (469 aa).

The 117-residue stretch at 3–119 (TRVYMHTLGC…VARIVSDAQA (117 aa)) folds into the MTTase N-terminal domain. [4Fe-4S] cluster contacts are provided by Cys12, Cys48, Cys82, Cys154, Cys158, and Cys161. The 231-residue stretch at 140 to 370 (SLPSHTAYLK…MAVQQAISRA (231 aa)) folds into the Radical SAM core domain. The TRAM domain occupies 373-441 (QAMIGRRVEV…EYDLVGRVVA (69 aa)). A disordered region spans residues 444 to 469 (PSRAARPLPAAPRAAPARKGGLNVLR). Low complexity predominate over residues 447–461 (AARPLPAAPRAAPAR).

Belongs to the methylthiotransferase family. RimO subfamily. [4Fe-4S] cluster is required as a cofactor.

The protein resides in the cytoplasm. The catalysed reaction is L-aspartate(89)-[ribosomal protein uS12]-hydrogen + (sulfur carrier)-SH + AH2 + 2 S-adenosyl-L-methionine = 3-methylsulfanyl-L-aspartate(89)-[ribosomal protein uS12]-hydrogen + (sulfur carrier)-H + 5'-deoxyadenosine + L-methionine + A + S-adenosyl-L-homocysteine + 2 H(+). Functionally, catalyzes the methylthiolation of an aspartic acid residue of ribosomal protein uS12. In Anaeromyxobacter sp. (strain K), this protein is Ribosomal protein uS12 methylthiotransferase RimO.